The primary structure comprises 273 residues: Cytoplasmic phosphatidylinositol transfer protein 1 (273 aa).

The disordered stretch occupies residues 244–273; sequence QAETNEKIHNTSGGANAAANAKEANDGDID.

It belongs to the PtdIns transfer protein family. PI transfer class IIB subfamily.

Functionally, phosphatidylinositol transfer proteins mediate the monomeric transport of lipids by shielding a lipid from the aqueous environment and binding the lipid in a hydrophobic cavity. In Drosophila melanogaster (Fruit fly), this protein is Cytoplasmic phosphatidylinositol transfer protein 1 (rdgBbeta).